Consider the following 256-residue polypeptide: Ubiquinone/menaquinone biosynthesis C-methyltransferase UbiE (256 aa).

Residues 1 to 12 (MNDQRKGDHAEP) show a composition bias toward basic and acidic residues. The interval 1–23 (MNDQRKGDHAEPTTHFGYQDVPE) is disordered. Residues Thr79, Asp100, and 128 to 129 (DA) each bind S-adenosyl-L-methionine.

It belongs to the class I-like SAM-binding methyltransferase superfamily. MenG/UbiE family.

The catalysed reaction is a 2-demethylmenaquinol + S-adenosyl-L-methionine = a menaquinol + S-adenosyl-L-homocysteine + H(+). It carries out the reaction a 2-methoxy-6-(all-trans-polyprenyl)benzene-1,4-diol + S-adenosyl-L-methionine = a 5-methoxy-2-methyl-3-(all-trans-polyprenyl)benzene-1,4-diol + S-adenosyl-L-homocysteine + H(+). It participates in quinol/quinone metabolism; menaquinone biosynthesis; menaquinol from 1,4-dihydroxy-2-naphthoate: step 2/2. It functions in the pathway cofactor biosynthesis; ubiquinone biosynthesis. Functionally, methyltransferase required for the conversion of demethylmenaquinol (DMKH2) to menaquinol (MKH2) and the conversion of 2-polyprenyl-6-methoxy-1,4-benzoquinol (DDMQH2) to 2-polyprenyl-3-methyl-6-methoxy-1,4-benzoquinol (DMQH2). In Pseudomonas putida (strain ATCC 700007 / DSM 6899 / JCM 31910 / BCRC 17059 / LMG 24140 / F1), this protein is Ubiquinone/menaquinone biosynthesis C-methyltransferase UbiE.